The chain runs to 52 residues: Large ribosomal subunit protein bL33 (52 aa).

Belongs to the bacterial ribosomal protein bL33 family.

This chain is Large ribosomal subunit protein bL33, found in Campylobacter jejuni subsp. doylei (strain ATCC BAA-1458 / RM4099 / 269.97).